The primary structure comprises 659 residues: Checkpoint protein RAD24 (659 aa).

Positions 24–54 are disordered; it reads TKWSSSRPTSPVRKARSTENDFLSKQDTSSI. 109-116 contacts ATP; the sequence is GPSGCSKS. Positions 596-612 are enriched in acidic residues; it reads EDEETSFNDDPIVDSDS. The tract at residues 596-659 is disordered; it reads EDEETSFNDD…SLSDSDLEIL (64 aa). Residues S652 and S654 each carry the phosphoserine modification.

Belongs to the rad17/RAD24 family. As to quaternary structure, component of the RAD24-RFC complex which consists of RAD14, RFC2, RFC3, RFC4 and RFC5 and associates with the checkpoint clamp DDC1:MEC3:RAD17 complex. RAD24 interacts with ECO1.

Its subcellular location is the nucleus. Functionally, participates in checkpoint pathways arrest of the cell cycle, a mechanism that allows the DNA repair pathways to act to restore the integrity of the DNA prior to DNA synthesis or separation of the replicated chromosomes. Regulates the DNA damage checkpoint pathway throughout the cell cycle, when associated with RCF5. Component of the RFC-like RAD24-RFC complex which loads the checkpoint clamp DDC1:MEC3:RAD17 complex and is involved in DNA repair pathways. During a clamp loading circle, the RFC:clamp complex binds to DNA and the recognition of the double-stranded/single-stranded junction stimulates ATP hydrolysis by RFC. The complex presumably provides bipartite ATP sites in which one subunit supplies a catalytic site for hydrolysis of ATP bound to the neighboring subunit. Dissociation of RFC from the clamp leaves the clamp encircling DNA. The protein is Checkpoint protein RAD24 (RAD24) of Saccharomyces cerevisiae (strain ATCC 204508 / S288c) (Baker's yeast).